Consider the following 838-residue polypeptide: Ribonuclease Z (838 aa).

Ser-824 is subject to Phosphoserine.

The protein belongs to the RNase Z family. As to quaternary structure, homodimer. The cofactor is Zn(2+).

The protein localises to the cytoplasm. It localises to the nucleus. It carries out the reaction Endonucleolytic cleavage of RNA, removing extra 3' nucleotides from tRNA precursor, generating 3' termini of tRNAs. A 3'-hydroxy group is left at the tRNA terminus and a 5'-phosphoryl group is left at the trailer molecule.. Zinc phosphodiesterase, which displays some tRNA 3'-processing endonuclease activity. Probably involved in tRNA maturation, by removing a 3'-trailer from precursor tRNA. In Saccharomyces cerevisiae (strain ATCC 204508 / S288c) (Baker's yeast), this protein is Ribonuclease Z (TRZ1).